The following is a 178-amino-acid chain: ATP-dependent protease subunit HslV (178 aa).

Thr-7 is an active-site residue. Gly-162, Cys-165, and Thr-168 together coordinate Na(+).

It belongs to the peptidase T1B family. HslV subfamily. A double ring-shaped homohexamer of HslV is capped on each side by a ring-shaped HslU homohexamer. The assembly of the HslU/HslV complex is dependent on binding of ATP.

It is found in the cytoplasm. It catalyses the reaction ATP-dependent cleavage of peptide bonds with broad specificity.. Allosterically activated by HslU binding. Its function is as follows. Protease subunit of a proteasome-like degradation complex believed to be a general protein degrading machinery. This Janthinobacterium sp. (strain Marseille) (Minibacterium massiliensis) protein is ATP-dependent protease subunit HslV.